Here is a 419-residue protein sequence, read N- to C-terminus: 3-isopropylmalate dehydratase large subunit (419 aa).

Residues Cys300, Cys360, and Cys363 each contribute to the [4Fe-4S] cluster site.

It belongs to the aconitase/IPM isomerase family. LeuC type 2 subfamily. Heterodimer of LeuC and LeuD. Requires [4Fe-4S] cluster as cofactor.

The catalysed reaction is (2R,3S)-3-isopropylmalate = (2S)-2-isopropylmalate. Its pathway is amino-acid biosynthesis; L-leucine biosynthesis; L-leucine from 3-methyl-2-oxobutanoate: step 2/4. Catalyzes the isomerization between 2-isopropylmalate and 3-isopropylmalate, via the formation of 2-isopropylmaleate. The polypeptide is 3-isopropylmalate dehydratase large subunit (Clostridium botulinum (strain Alaska E43 / Type E3)).